A 60-amino-acid chain; its full sequence is Protein YmjC (60 aa).

Residues 40-60 (HKPYPTNKMQTTSGKKVIQDR) are disordered.

This Escherichia coli (strain K12) protein is Protein YmjC (ymjC).